Here is a 369-residue protein sequence, read N- to C-terminus: MTKNLYLGVMSGTSLDGVDLCVMDFAKNPPKLTACGFTPMPEDLRTDLSHLLKSGETSLQKLGEIDHRLGLLYAESIKRFLAEHQLSASDIQAIGCHGQTVWHSPNGNFPFTMQIGDMNLVAAHTGITTIADFRRKDMAVGGQGAPLVPAFHEGIFASPERLTVVLNIGGISNISVLAPQQPTIGYDVSVGNALMDSWIELHQAKRYDKNAEWAKTGTLIPALLDSLLDEPFFKLPAPKSTGRELFNLEWLVKKSANLTTYRPEDVQRTLAEFTVQSVVNELKTLESEKQCLLLACGGGARNPLLMQRFSELLPKWQVATTDEYGLDIDYVEAAAFAWLAYQRVHNLTNNLPSVTGAKEPVSLGVIYPK.

12-19 (GTSLDGVD) contributes to the ATP binding site.

Belongs to the anhydro-N-acetylmuramic acid kinase family.

It carries out the reaction 1,6-anhydro-N-acetyl-beta-muramate + ATP + H2O = N-acetyl-D-muramate 6-phosphate + ADP + H(+). The protein operates within amino-sugar metabolism; 1,6-anhydro-N-acetylmuramate degradation. It participates in cell wall biogenesis; peptidoglycan recycling. Its function is as follows. Catalyzes the specific phosphorylation of 1,6-anhydro-N-acetylmuramic acid (anhMurNAc) with the simultaneous cleavage of the 1,6-anhydro ring, generating MurNAc-6-P. Is required for the utilization of anhMurNAc either imported from the medium or derived from its own cell wall murein, and thus plays a role in cell wall recycling. The sequence is that of Anhydro-N-acetylmuramic acid kinase from Actinobacillus pleuropneumoniae serotype 3 (strain JL03).